The chain runs to 198 residues: Probable nicotinate-nucleotide adenylyltransferase (198 aa).

Belongs to the NadD family.

The enzyme catalyses nicotinate beta-D-ribonucleotide + ATP + H(+) = deamido-NAD(+) + diphosphate. It participates in cofactor biosynthesis; NAD(+) biosynthesis; deamido-NAD(+) from nicotinate D-ribonucleotide: step 1/1. Catalyzes the reversible adenylation of nicotinate mononucleotide (NaMN) to nicotinic acid adenine dinucleotide (NaAD). The protein is Probable nicotinate-nucleotide adenylyltransferase of Herpetosiphon aurantiacus (strain ATCC 23779 / DSM 785 / 114-95).